Here is a 154-residue protein sequence, read N- to C-terminus: Ribonuclease K6 (154 aa).

An N-terminal signal peptide occupies residues 1 to 27 (MGPHLLGRSSLLLLLLGMWWSVRPLCA). Histidine 42 serves as the catalytic Proton acceptor. 4 cysteine pairs are disulfide-bonded: cysteine 50–cysteine 108, cysteine 64–cysteine 118, cysteine 82–cysteine 133, and cysteine 89–cysteine 96. The N-linked (GlcNAc...) asparagine glycan is linked to asparagine 59. Substrate contacts are provided by residues 65 to 69 (KPENT) and lysine 90. Asparagine 104 carries N-linked (GlcNAc...) asparagine glycosylation. The active-site Proton donor is the histidine 149.

This sequence belongs to the pancreatic ribonuclease family. Interacts (via N-terminus) with bacterial lipopolysaccharide (LPS). Kidney (at protein level).

Its subcellular location is the secreted. It localises to the lysosome. The protein resides in the cytoplasmic granule. Functionally, ribonuclease which shows a preference for the pyrimidines uridine and cytosine. Has potent antimicrobial activity against a range of Gram-positive and Gram-negative bacteria, including P.aeruginosa, A.baumanii, M.luteus, S.aureus, E.faecalis, E.faecium, S.saprophyticus and E.coli. Causes loss of bacterial membrane integrity, and also promotes agglutination of Gram-negative bacteria. Probably contributes to urinary tract sterility. Bactericidal activity is independent of RNase activity. This Bos taurus (Bovine) protein is Ribonuclease K6 (RNASE6).